Here is a 599-residue protein sequence, read N- to C-terminus: ATP-binding cassette sub-family E member 1 (599 aa).

4Fe-4S ferredoxin-type domains follow at residues 7–37 (RIAI…MGKL) and 46–75 (KIAW…IVNL). A Glycyl lysine isopeptide (Lys-Gly) (interchain with G-Cter in ubiquitin) cross-link involves residue lysine 20. ABC transporter domains are found at residues 79–315 (LEKE…FLDG) and 342–562 (VKKM…LSQL). ATP is bound by residues 110 to 117 (GTNGIGKS) and 379 to 386 (GENGTGKT). The residue at position 417 (serine 417) is a Phosphoserine. Position 550 is a phosphothreonine (threonine 550).

The protein belongs to the ABC transporter superfamily. ABCE family. As to quaternary structure, (Microbial infection) Interacts with Chandipura virus matrix protein. Interacts with PINK1. Interacts with CNOT4. Interacts with PELO. Probably heterodimerizes with RNASEL; this interaction inhibits RNASEL. In terms of assembly, (Microbial infection) Interacts with HIV-1 proteins Vif and Gag. As to quaternary structure, (Microbial infection) Interacts with HIV-2 protein Gag. Ubiquitinated by CNOT4. Ubiquitination mediates the recruitment of autophagy receptors to the mitochondrial outer membrane and initiates mitophagy.

The protein resides in the cytoplasm. The protein localises to the mitochondrion. The enzyme catalyses GTP + H2O = GDP + phosphate + H(+). The catalysed reaction is ATP + H2O = ADP + phosphate + H(+). It catalyses the reaction CTP + H2O = CDP + phosphate + H(+). It carries out the reaction UTP + H2O = UDP + phosphate + H(+). Its function is as follows. Nucleoside-triphosphatase (NTPase) involved in ribosome recycling by mediating ribosome disassembly. Able to hydrolyze ATP, GTP, UTP and CTP. Splits ribosomes into free 60S subunits and tRNA- and mRNA-bound 40S subunits. Acts either after canonical termination facilitated by release factors (ETF1/eRF1) or after recognition of stalled and vacant ribosomes by mRNA surveillance factors (PELO/Pelota). Involved in the No-Go Decay (NGD) pathway: recruited to stalled ribosomes by the Pelota-HBS1L complex, and drives the disassembly of stalled ribosomes, followed by degradation of damaged mRNAs as part of the NGD pathway. Also plays a role in quality control of translation of mitochondrial outer membrane-localized mRNA. As part of the PINK1-regulated signaling, ubiquitinated by CNOT4 upon mitochondria damage; this modification generates polyubiquitin signals that recruit autophagy receptors to the mitochondrial outer membrane and initiate mitophagy. RNASEL-specific protein inhibitor which antagonizes the binding of 2-5A (5'-phosphorylated 2',5'-linked oligoadenylates) to RNASEL. Negative regulator of the anti-viral effect of the interferon-regulated 2-5A/RNASEL pathway. In terms of biological role, (Microbial infection) May act as a chaperone for post-translational events during HIV-1 capsid assembly. (Microbial infection) Plays a role in the down-regulation of the 2-5A/RNASEL pathway during encephalomyocarditis virus (EMCV) and HIV-1 infections. In Homo sapiens (Human), this protein is ATP-binding cassette sub-family E member 1 (ABCE1).